The primary structure comprises 23 residues: Nephrotoxin PsTX-115 (23 aa).

The protein resides in the secreted. Its subcellular location is the nematocyst. Functionally, nephrotoxin. When injected intravenously in rats, causes severe destructive glomerular changes. At 24 hours post-injection partial disruption of the glomerular basement membrane, massive thrombus formation in glomerular capillaries, severe mesangiolysis and infiltrating cells were observed in the majority of glomeruli. This chain is Nephrotoxin PsTX-115, found in Phyllodiscus semoni (Night anemone).